Consider the following 314-residue polypeptide: Ribosomal RNA small subunit methyltransferase H (314 aa).

Residues 37-39 (GGH), aspartate 56, phenylalanine 86, aspartate 108, and histidine 115 each bind S-adenosyl-L-methionine.

Belongs to the methyltransferase superfamily. RsmH family.

Its subcellular location is the cytoplasm. It catalyses the reaction cytidine(1402) in 16S rRNA + S-adenosyl-L-methionine = N(4)-methylcytidine(1402) in 16S rRNA + S-adenosyl-L-homocysteine + H(+). Functionally, specifically methylates the N4 position of cytidine in position 1402 (C1402) of 16S rRNA. This is Ribosomal RNA small subunit methyltransferase H from Leptospira biflexa serovar Patoc (strain Patoc 1 / ATCC 23582 / Paris).